Reading from the N-terminus, the 108-residue chain is Large ribosomal subunit protein uL24 (108 aa).

Belongs to the universal ribosomal protein uL24 family. As to quaternary structure, part of the 50S ribosomal subunit.

Functionally, one of two assembly initiator proteins, it binds directly to the 5'-end of the 23S rRNA, where it nucleates assembly of the 50S subunit. One of the proteins that surrounds the polypeptide exit tunnel on the outside of the subunit. In Mycoplasma capricolum subsp. capricolum (strain California kid / ATCC 27343 / NCTC 10154), this protein is Large ribosomal subunit protein uL24.